The primary structure comprises 278 residues: uncharacterized protein (278 aa).

Residues 1–32 (MSSASFTTKALSVLAALTAASAPLVAASPAHA) form the signal peptide. In terms of domain architecture, Peptidase S1 spans 33 to 236 (LANARNVTGS…HAEWIAYYTG (204 aa)). An intrachain disulfide couples cysteine 59 to cysteine 75. Residues histidine 74, aspartate 123, and serine 189 each act as charge relay system in the active site.

It belongs to the peptidase S1 family.

It localises to the secreted. This is an uncharacterized protein from Corynebacterium glutamicum (strain R).